We begin with the raw amino-acid sequence, 193 residues long: MSPTPSSGPVIAPAPKGILDPATGRPVGAHDPYFLEVKHELSDKGFFVATADDLITWARTGSLMWMTFGLACCAVEMMQVSMPRYDVERFGFAPRASPRQSDVMIVAGTLTNKMAPALRKVYDQMPEPRYVISMGSCANGGGYYHYSYSVVRGCDRIVPIDIYVPGCPPTAEALLYGVLLLQKKIRRTGTIER.

[4Fe-4S] cluster contacts are provided by Cys-72, Cys-73, Cys-137, and Cys-167.

This sequence belongs to the complex I 20 kDa subunit family. As to quaternary structure, NDH-1 is composed of 14 different subunits. Subunits NuoB, C, D, E, F, and G constitute the peripheral sector of the complex. The cofactor is [4Fe-4S] cluster.

The protein resides in the cell inner membrane. It carries out the reaction a quinone + NADH + 5 H(+)(in) = a quinol + NAD(+) + 4 H(+)(out). Its function is as follows. NDH-1 shuttles electrons from NADH, via FMN and iron-sulfur (Fe-S) centers, to quinones in the respiratory chain. The immediate electron acceptor for the enzyme in this species is believed to be ubiquinone. Couples the redox reaction to proton translocation (for every two electrons transferred, four hydrogen ions are translocated across the cytoplasmic membrane), and thus conserves the redox energy in a proton gradient. This Bradyrhizobium sp. (strain ORS 278) protein is NADH-quinone oxidoreductase subunit B.